The following is a 208-amino-acid chain: Virion protein US10 homolog (208 aa).

Positions 17-61 are disordered; that stretch reads ARGAKLSPGQHPRPSHAVRGRTAPGTRSSRRRTCEDGTSGPRDPR. A zinc finger spans residues 167–179; sequence CAFWCCLAHAATC.

This sequence belongs to the herpesviridae US10 family. Phosphorylated.

The protein resides in the virion tegument. Its subcellular location is the host nucleus matrix. The protein is Virion protein US10 homolog of Homo sapiens (Human).